Consider the following 498-residue polypeptide: Minor fimbrium subunit Mfa1 (498 aa).

Positions M1 to S19 are cleaved as a signal peptide. A lipid anchor (N-palmitoyl cysteine) is attached at C20. C20 carries S-diacylglycerol cysteine lipidation. Residues C20–R50 constitute a propeptide that is removed on maturation. Positions S436–Q476 are disordered.

It belongs to the bacteroidetes fimbrillin superfamily. FimA/Mfa1 family. In terms of assembly, structural component of the fimbrial stalk. Minor fimbriae are composed of a structural subunit, most often Mfa1, and the accessory subunits Mfa3, Mfa4 and Mfa5. Mfa1 interacts with Mfa2; this anchors the fimbrium in the membrane. Fimbrium assembly occurs by linear, head-to-tail oligomerization of fimbrial subunits. This is mediated via insertion of a C-terminal beta-strand from one subunit into a groove in the N-terminal domain of the following subunit.

The protein localises to the fimbrium. It is found in the cell outer membrane. Structural subunit of the minor fimbriae. These filamentous pili are attached to the cell surface; they mediate biofilm formation, adhesion onto host cells and onto other bacteria that are part of the oral microbiome. They play an important role in invasion of periodontal tissues and are recognized as major virulence factors. Mfa1 orthologs from different strains have highly divergent sequences, and this correlates with pathogenicity. This Porphyromonas gingivalis (Bacteroides gingivalis) protein is Minor fimbrium subunit Mfa1.